Here is a 249-residue protein sequence, read N- to C-terminus: MTRKLVLLRHGQSQWNLDNRFTGWVDVELTDQGCQEAVAAGKLMKDEGLQFDVAHTSVLKRAIHTLQGALKELDQDWLPVSKSWRLNERHYGGLQGLDKAETAAKHGEEQVKIWRRSYDIPPPAMDVDDPGHPCHDRRYATLDRNALPGTESLATTLVRVLPYWHDAIAPQLKAGQTVLVTAHGNSLRALYKYLNDVSNEQILELNIPTGIPLLFELDDNLQVRSFRYLGDPEAAKRAAEAVANQGKAK.

Substrate is bound by residues 9 to 16, 22 to 23, R61, 88 to 91, K99, 115 to 116, and 184 to 185; these read RHGQSQWN, TG, ERHY, RR, and GN. The Tele-phosphohistidine intermediate role is filled by H10. E88 (proton donor/acceptor) is an active-site residue.

The protein belongs to the phosphoglycerate mutase family. BPG-dependent PGAM subfamily. In terms of assembly, homodimer.

The catalysed reaction is (2R)-2-phosphoglycerate = (2R)-3-phosphoglycerate. It functions in the pathway carbohydrate degradation; glycolysis; pyruvate from D-glyceraldehyde 3-phosphate: step 3/5. In terms of biological role, catalyzes the interconversion of 2-phosphoglycerate and 3-phosphoglycerate. In Xanthomonas oryzae pv. oryzae (strain PXO99A), this protein is 2,3-bisphosphoglycerate-dependent phosphoglycerate mutase.